The primary structure comprises 474 residues: 6-phospho-beta-galactosidase (474 aa).

D-galactose 6-phosphate is bound by residues Gln-19, His-116, Asn-159, Glu-160, and Asn-297. Glu-160 serves as the catalytic Proton donor. Glu-375 acts as the Nucleophile in catalysis. D-galactose 6-phosphate-binding residues include Ser-433, Trp-434, Lys-440, and Tyr-442.

It belongs to the glycosyl hydrolase 1 family.

The catalysed reaction is a 6-phospho-beta-D-galactoside + H2O = D-galactose 6-phosphate + an alcohol. It participates in carbohydrate metabolism; lactose degradation; D-galactose 6-phosphate and beta-D-glucose from lactose 6-phosphate: step 1/1. The chain is 6-phospho-beta-galactosidase from Lacticaseibacillus casei (strain BL23) (Lactobacillus casei).